Here is a 156-residue protein sequence, read N- to C-terminus: Small ribosomal subunit protein uS7 (156 aa).

It belongs to the universal ribosomal protein uS7 family. As to quaternary structure, part of the 30S ribosomal subunit. Contacts proteins S9 and S11.

One of the primary rRNA binding proteins, it binds directly to 16S rRNA where it nucleates assembly of the head domain of the 30S subunit. Is located at the subunit interface close to the decoding center, probably blocks exit of the E-site tRNA. The sequence is that of Small ribosomal subunit protein uS7 from Clavibacter michiganensis subsp. michiganensis (strain NCPPB 382).